The primary structure comprises 387 residues: Succinate--CoA ligase [ADP-forming] subunit beta (387 aa).

The ATP-grasp domain maps to 9–236 (KELFAKHNVP…KDATDPLELK (228 aa)). ATP-binding positions include K45, 52–54 (GRG), S94, and E99. The Mg(2+) site is built by N191 and D205. Substrate is bound by residues N256 and 318 to 320 (GIT).

The protein belongs to the succinate/malate CoA ligase beta subunit family. In terms of assembly, heterotetramer of two alpha and two beta subunits. Requires Mg(2+) as cofactor.

The enzyme catalyses succinate + ATP + CoA = succinyl-CoA + ADP + phosphate. The catalysed reaction is GTP + succinate + CoA = succinyl-CoA + GDP + phosphate. It participates in carbohydrate metabolism; tricarboxylic acid cycle; succinate from succinyl-CoA (ligase route): step 1/1. Succinyl-CoA synthetase functions in the citric acid cycle (TCA), coupling the hydrolysis of succinyl-CoA to the synthesis of either ATP or GTP and thus represents the only step of substrate-level phosphorylation in the TCA. The beta subunit provides nucleotide specificity of the enzyme and binds the substrate succinate, while the binding sites for coenzyme A and phosphate are found in the alpha subunit. This is Succinate--CoA ligase [ADP-forming] subunit beta from Mycolicibacterium vanbaalenii (strain DSM 7251 / JCM 13017 / BCRC 16820 / KCTC 9966 / NRRL B-24157 / PYR-1) (Mycobacterium vanbaalenii).